Reading from the N-terminus, the 47-residue chain is Short transmembrane mitochondrial protein 1 (47 aa).

A helical membrane pass occupies residues 7–23; that stretch reads GFTLGNVVGMYLAQNYD.

This sequence belongs to the STMP1 family. As to quaternary structure, interacts with components of the ubiquinol-cytochrome c oxidoreductase (cytochrome b-c1 complex, complex III, CIII), such as UQCRC1/QCR1, UQCRC2/QCR2 and UQCR10/QCR9. Interacts with components of the cytochrome c oxidase (mitochondrial respiratory chain complex IV) complex, such as MT-CO2. In terms of tissue distribution, expressed in monocytes and dendritic cells.

The protein localises to the mitochondrion inner membrane. It localises to the mitochondrion outer membrane. The protein resides in the mitochondrion intermembrane space. Functionally, microprotein involved in mitochondrial respiratory chain complex III (ubiquinol-cytochrome c oxidoreductase) and complex IV (mitochondrial cytochrome c oxidase complex) assembly. Required for the formation of mitochondrial supercomplexes (SCs). Also required for the activation of the NLRP3 inflammasome. The protein is Short transmembrane mitochondrial protein 1 of Homo sapiens (Human).